The chain runs to 124 residues: Large ribosomal subunit protein bL12 (124 aa).

The protein belongs to the bacterial ribosomal protein bL12 family. As to quaternary structure, homodimer. Part of the ribosomal stalk of the 50S ribosomal subunit. Forms a multimeric L10(L12)X complex, where L10 forms an elongated spine to which 2 to 4 L12 dimers bind in a sequential fashion. Binds GTP-bound translation factors.

Functionally, forms part of the ribosomal stalk which helps the ribosome interact with GTP-bound translation factors. Is thus essential for accurate translation. This Christiangramia forsetii (strain DSM 17595 / CGMCC 1.15422 / KT0803) (Gramella forsetii) protein is Large ribosomal subunit protein bL12.